Consider the following 80-residue polypeptide: Small ribosomal subunit protein bS18 (80 aa).

The protein belongs to the bacterial ribosomal protein bS18 family. As to quaternary structure, part of the 30S ribosomal subunit. Forms a tight heterodimer with protein bS6.

Binds as a heterodimer with protein bS6 to the central domain of the 16S rRNA, where it helps stabilize the platform of the 30S subunit. This chain is Small ribosomal subunit protein bS18, found in Methylocella silvestris (strain DSM 15510 / CIP 108128 / LMG 27833 / NCIMB 13906 / BL2).